The sequence spans 953 residues: MTEVYSKAPATVGQVKLSNNGTSNKAYSVPKSPAPVRTDLFSKIPAGTKIQVGSHSVIIQRYLSEGGFSHVYLALLENEKPFVLKRIYVPDKTALQLVHGEIETMKRLKGHRHIVNYIDSSALYSKSENRYEVYLLMEFCAGGGLIDFMNTRLQHRLTEGEILKILADVCDAVAAMHYLDPPLIHRDLKIENVLLVAPNSYKLCDFGSACEPLAPATTPDTIMFLEQNIAAYTTPQYRAPEMIDINRRQGIDEKSDIWAIGVLAYKLCYYTTPFEQVGNSAILKASFSFPPFPRYSDRMKRFIATCLQEQPSHRPNIYQTLKEIMEMQGTPLKLPDVYGGVNASTYNPPRAPLQRTPSGSLTPLSSRPAHTSLPPIPTVQTTSSNVPPVNRPSLKSKSPSVSNILSNQLSPISSANNDVMARLQPKSPIPATKSYSATIQTPRSPSLRRADSTSHIIKVPHLPDTSVKTAKTGASEIDVLSRYPSVEEIDKITDKIEVSKPLRNSGPLAFKPFEKISANKQTDLLQNKPEALLDLENRFLPKPSPKPSEFSSSVGSKQNLSMDIPSVQNVSTKQKSTNDTDNSKLKINKPLTGGYAPLPSRPNRMNHSVLNEKSNKEFVRGPRVLPPIEVSSSKMAGLDIRKEPFTPAVPSAKSGLKKDQSSEVANKDVVSKNKDNIAILADREARPQLLLDDNNDSSSSSSEHLISFNNHTGNKILSRQTTSSSIDSNNVQSNIEFLKGLNATHARSTSQVSHTQRLQQSISTSLERVKSNTKKESNSPRQVSKLKRPIGASNKILSGKFGEAFKKFEFGGEKMSRRRKSETKKNLVSILPDTEVDEYPKASNEWIVESEELPQVHETINQYRKSCETQRSRKSHEGSNDLERQPSSPDTVHPGIKRSHFIRERVKQLLSDANKHHQSPSDSETDRTPDSSSIHLPHIERLNLFHTKSESLE.

The 270-residue stretch at 57–326 (VIIQRYLSEG…IYQTLKEIME (270 aa)) folds into the Protein kinase domain. ATP-binding positions include 63-71 (LSEGGFSHV) and Lys85. Asp187 acts as the Proton acceptor in catalysis. Disordered regions lie at residues 343–402 (ASTY…PSVS), 427–451 (SPIP…RRAD), 538–606 (RFLP…NRMN), 641–669 (RKEP…NKDV), 748–791 (STSQ…RPIG), and 864–953 (RKSC…ESLE). Composition is skewed to polar residues over residues 355–369 (RTPS…SRPA), 378–402 (TVQT…PSVS), and 433–444 (KSYSATIQTPRS). The segment covering 547 to 557 (PSEFSSSVGSK) has biased composition (low complexity). Residues 558 to 575 (QNLSMDIPSVQNVSTKQK) show a composition bias toward polar residues. The segment covering 656 to 669 (LKKDQSSEVANKDV) has biased composition (basic and acidic residues). Positions 748-766 (STSQVSHTQRLQQSISTSL) are enriched in polar residues. Composition is skewed to basic and acidic residues over residues 767-778 (ERVKSNTKKESN), 865-884 (KSCE…DLER), and 937-953 (PHIE…ESLE). Phosphoserine is present on residues Ser872 and Ser875.

This sequence belongs to the protein kinase superfamily. Ser/Thr protein kinase family.

It localises to the cytoplasm. It carries out the reaction L-seryl-[protein] + ATP = O-phospho-L-seryl-[protein] + ADP + H(+). The catalysed reaction is L-threonyl-[protein] + ATP = O-phospho-L-threonyl-[protein] + ADP + H(+). This chain is Serine/threonine-protein kinase ppk30 (ppk30), found in Schizosaccharomyces pombe (strain 972 / ATCC 24843) (Fission yeast).